The sequence spans 122 residues: Small ribosomal subunit protein uS13c (122 aa).

The interval Arg-102–Lys-122 is disordered.

This sequence belongs to the universal ribosomal protein uS13 family. As to quaternary structure, part of the 30S ribosomal subunit.

It is found in the plastid. The protein localises to the chloroplast. Functionally, located at the top of the head of the 30S subunit, it contacts several helices of the 16S rRNA. The polypeptide is Small ribosomal subunit protein uS13c (Guillardia theta (Cryptophyte)).